The following is a 126-amino-acid chain: Fluoride-specific ion channel FluC 2 (126 aa).

4 consecutive transmembrane segments (helical) span residues 11–31 (VLLI…ICEH), 36–56 (LGIL…MYDA), 69–89 (AFGT…VQSF), and 93–113 (FLPA…GVFF). Residues Gly76 and Thr79 each coordinate Na(+).

The protein belongs to the fluoride channel Fluc/FEX (TC 1.A.43) family.

The protein localises to the cell membrane. It carries out the reaction fluoride(in) = fluoride(out). Its activity is regulated as follows. Na(+) is not transported, but it plays an essential structural role and its presence is essential for fluoride channel function. Its function is as follows. Fluoride-specific ion channel. Important for reducing fluoride concentration in the cell, thus reducing its toxicity. This is Fluoride-specific ion channel FluC 2 from Methanosarcina mazei (strain ATCC BAA-159 / DSM 3647 / Goe1 / Go1 / JCM 11833 / OCM 88) (Methanosarcina frisia).